The chain runs to 113 residues: uncharacterized protein (113 aa).

The helical transmembrane segment at 4 to 26 (VLFKIAVALLYLLSFFLHRLHLR) threads the bilayer. Positions 32 to 74 (RRRRRRHHRRHHRRHHHHRRRRRRRRRRRRRHHRHHHHRHRRR) are disordered.

Its subcellular location is the membrane. This is an uncharacterized protein from Saccharomyces cerevisiae (strain ATCC 204508 / S288c) (Baker's yeast).